Consider the following 1574-residue polypeptide: Plexin-C1 (1574 aa).

Positions 1 to 34 (MEVSRRKTPPRPPYPAAPLPLIAYLLALAAPARG) are cleaved as a signal peptide. One can recognise a Sema domain in the interval 35–452 (ADEPVWRSEQ…AGKEVRRIPV (418 aa)). The Extracellular portion of the chain corresponds to 35–950 (ADEPVWRSEQ…YVEQESVPST (916 aa)). Cysteines 64 and 87 form a disulfide. 3 N-linked (GlcNAc...) asparagine glycosylation sites follow: Asn86, Asn143, and Asn149. Residues Cys156 and Cys194 are joined by a disulfide bond. A glycan (N-linked (GlcNAc...) asparagine) is linked at Asn252. Cysteines 283 and 329 form a disulfide. Residues Asn386 and Asn407 are each glycosylated (N-linked (GlcNAc...) asparagine). 4 disulfide bridges follow: Cys455/Cys472, Cys461/Cys506, Cys464/Cys481, and Cys475/Cys487. N-linked (GlcNAc...) asparagine glycosylation is found at Asn694, Asn773, and Asn802. A helical transmembrane segment spans residues 951 to 971 (WYFLIALPILLAIVIVVAVVV). At 972–1574 (TRYKSKELSR…FDEKKKCKWM (603 aa)) the chain is on the cytoplasmic side. A Phosphoserine modification is found at Ser984.

Belongs to the plexin family. In terms of assembly, monomer. Homodimer. Interacts with SEMA7A. Detected on dendritic cells, skin Langerhans cells and neutrophils (at protein level).

It localises to the membrane. In terms of biological role, receptor for SEMA7A, for vaccinia virus semaphorin A39R and for herpesvirus Sema protein. Binding of semaphorins triggers cellular responses leading to the rearrangement of the cytoskeleton and to secretion of IL6 and IL8. This is Plexin-C1 (Plxnc1) from Mus musculus (Mouse).